A 231-amino-acid chain; its full sequence is Thymidylate kinase (231 aa).

An ATP-binding site is contributed by 10-17; it reads GGEGAGKT.

It belongs to the thymidylate kinase family.

The catalysed reaction is dTMP + ATP = dTDP + ADP. Phosphorylation of dTMP to form dTDP in both de novo and salvage pathways of dTTP synthesis. In Acaryochloris marina (strain MBIC 11017), this protein is Thymidylate kinase.